The primary structure comprises 390 residues: 1-acyl-sn-glycerol-3-phosphate acyltransferase 2 (390 aa).

A helical transmembrane segment spans residues 2 to 22 (AMAAAVIVPLGILFFISGLVV). The short motif at 91 to 96 (HRSDID) is the HXXXXD motif element. Transmembrane regions (helical) follow at residues 305–325 (LAVV…FLHW) and 333–353 (KGIA…QILI). Residues 358–390 (SERSTPAKVAPAKPKDNHQSGPSSQTEVEEKQK) are disordered.

Belongs to the 1-acyl-sn-glycerol-3-phosphate acyltransferase family.

It localises to the endoplasmic reticulum membrane. It carries out the reaction a 1-acyl-sn-glycero-3-phosphate + an acyl-CoA = a 1,2-diacyl-sn-glycero-3-phosphate + CoA. The protein operates within phospholipid metabolism; CDP-diacylglycerol biosynthesis; CDP-diacylglycerol from sn-glycerol 3-phosphate: step 2/3. Converts lysophosphatidic acid (LPA) into phosphatidic acid by incorporating acyl moiety at the 2 position. The protein is 1-acyl-sn-glycerol-3-phosphate acyltransferase 2 (LPAT2) of Brassica napus (Rape).